The sequence spans 179 residues: Large ribosomal subunit protein uL5 (179 aa).

This sequence belongs to the universal ribosomal protein uL5 family. As to quaternary structure, part of the 50S ribosomal subunit; part of the 5S rRNA/L5/L18/L25 subcomplex. Contacts the 5S rRNA and the P site tRNA. Forms a bridge to the 30S subunit in the 70S ribosome.

Its function is as follows. This is one of the proteins that bind and probably mediate the attachment of the 5S RNA into the large ribosomal subunit, where it forms part of the central protuberance. In the 70S ribosome it contacts protein S13 of the 30S subunit (bridge B1b), connecting the 2 subunits; this bridge is implicated in subunit movement. Contacts the P site tRNA; the 5S rRNA and some of its associated proteins might help stabilize positioning of ribosome-bound tRNAs. This chain is Large ribosomal subunit protein uL5, found in Alkalilimnicola ehrlichii (strain ATCC BAA-1101 / DSM 17681 / MLHE-1).